The chain runs to 440 residues: Exodeoxyribonuclease 7 large subunit (440 aa).

This sequence belongs to the XseA family. As to quaternary structure, heterooligomer composed of large and small subunits.

It is found in the cytoplasm. It carries out the reaction Exonucleolytic cleavage in either 5'- to 3'- or 3'- to 5'-direction to yield nucleoside 5'-phosphates.. In terms of biological role, bidirectionally degrades single-stranded DNA into large acid-insoluble oligonucleotides, which are then degraded further into small acid-soluble oligonucleotides. The sequence is that of Exodeoxyribonuclease 7 large subunit from Ralstonia nicotianae (strain ATCC BAA-1114 / GMI1000) (Ralstonia solanacearum).